The sequence spans 525 residues: Lysine--tRNA ligase (525 aa).

The short motif at alanine 40–serine 48 is the 'HIGH' region element. Residues lysine 295–serine 299 carry the 'KMSKS' region motif. Lysine 298 contacts ATP.

The protein belongs to the class-I aminoacyl-tRNA synthetase family.

The protein resides in the cytoplasm. The enzyme catalyses tRNA(Lys) + L-lysine + ATP = L-lysyl-tRNA(Lys) + AMP + diphosphate. This is Lysine--tRNA ligase (lysS) from Cenarchaeum symbiosum (strain A).